The primary structure comprises 300 residues: Small ribosomal subunit protein uS2 (300 aa).

The segment at 269–300 (WEADGADWAASSAAAPAESWAAEAQGAEGAKW) is disordered.

It belongs to the universal ribosomal protein uS2 family. Component of the small ribosomal subunit. Mature ribosomes consist of a small (40S) and a large (60S) subunit. The 40S subunit contains about 33 different proteins and 1 molecule of RNA (18S). The 60S subunit contains about 49 different proteins and 3 molecules of RNA (25S, 5.8S and 5S). Interacts with rps21.

Its subcellular location is the cytoplasm. Functionally, required for the assembly and/or stability of the 40S ribosomal subunit. Required for the processing of the 20S rRNA-precursor to mature 18S rRNA in a late step of the maturation of 40S ribosomal subunits. The protein is Small ribosomal subunit protein uS2 (rps0) of Aspergillus terreus (strain NIH 2624 / FGSC A1156).